A 169-amino-acid chain; its full sequence is Small ribosomal subunit protein uS5 (169 aa).

Residues 14 to 77 form the S5 DRBM domain; that stretch reads MKEQVVDIRR…QAAKKNLLLV (64 aa).

This sequence belongs to the universal ribosomal protein uS5 family. As to quaternary structure, part of the 30S ribosomal subunit. Contacts proteins S4 and S8.

With S4 and S12 plays an important role in translational accuracy. Its function is as follows. Located at the back of the 30S subunit body where it stabilizes the conformation of the head with respect to the body. This chain is Small ribosomal subunit protein uS5, found in Alkaliphilus metalliredigens (strain QYMF).